Reading from the N-terminus, the 229-residue chain is 5'-methylthioadenosine/S-adenosylhomocysteine nucleosidase (229 aa).

Glu12 functions as the Proton acceptor in the catalytic mechanism. Substrate contacts are provided by residues Gly78, Ile152, and 173 to 174 (ME). Residue Asp197 is the Proton donor of the active site.

This sequence belongs to the PNP/UDP phosphorylase family. MtnN subfamily.

The enzyme catalyses S-adenosyl-L-homocysteine + H2O = S-(5-deoxy-D-ribos-5-yl)-L-homocysteine + adenine. It catalyses the reaction S-methyl-5'-thioadenosine + H2O = 5-(methylsulfanyl)-D-ribose + adenine. It carries out the reaction 5'-deoxyadenosine + H2O = 5-deoxy-D-ribose + adenine. It participates in amino-acid biosynthesis; L-methionine biosynthesis via salvage pathway; S-methyl-5-thio-alpha-D-ribose 1-phosphate from S-methyl-5'-thioadenosine (hydrolase route): step 1/2. Functionally, catalyzes the irreversible cleavage of the glycosidic bond in both 5'-methylthioadenosine (MTA) and S-adenosylhomocysteine (SAH/AdoHcy) to adenine and the corresponding thioribose, 5'-methylthioribose and S-ribosylhomocysteine, respectively. Also cleaves 5'-deoxyadenosine, a toxic by-product of radical S-adenosylmethionine (SAM) enzymes, into 5-deoxyribose and adenine. This is 5'-methylthioadenosine/S-adenosylhomocysteine nucleosidase from Histophilus somni (strain 2336) (Haemophilus somnus).